The following is a 905-amino-acid chain: Protein LONGIFOLIA 2 (905 aa).

Disordered regions lie at residues 42 to 136 (VSGG…GGLM), 232 to 268 (RLSLDSRSNSFRSPRADAARSSCPEEPATMTHRRSSS), 285 to 315 (DTEQRRENRFCDSPRPMSRVEPTALQRSRSV), 432 to 585 (STSP…SDSN), 606 to 626 (CDFPEQHTPKQRSPDFGIKQD), and 690 to 711 (VPFPQSNRGPMKPSSDHFECSP). Positions 65–74 (ESDKETERSS) are enriched in basic and acidic residues. Positions 90–117 (FESSSRPSFSSSPRSSSFSSAEVSTTAS) are enriched in low complexity. Over residues 286–296 (TEQRRENRFCD) the composition is skewed to basic and acidic residues. 3 stretches are compositionally biased toward polar residues: residues 432 to 461 (STSPLPQNVTLPNVKVGNSRQTRKVTSGKQ), 477 to 487 (LDSTKSNSPKT), and 501 to 516 (MTKSGRSQQHSVSPRT). Residues 566 to 581 (PDDRLSDARSDLRSLR) show a composition bias toward basic and acidic residues.

As to quaternary structure, interacts (via C-terminus) with TON1A and TON1B.

It is found in the cytoplasm. It localises to the cytoskeleton. In association with LNG1, regulates leaf morphology by promoting longitudinal polar cell elongation independently of ROT3. Associates with microtubules and recruits TON1A and TON1B to the cytoskeleton through its C-terminus. This chain is Protein LONGIFOLIA 2 (LNG2), found in Arabidopsis thaliana (Mouse-ear cress).